Reading from the N-terminus, the 322-residue chain is Ribose-phosphate pyrophosphokinase 1 (322 aa).

ATP contacts are provided by residues 39-41 (DGE) and 98-99 (RQ). Residues histidine 132 and aspartate 173 each contribute to the Mg(2+) site. Lysine 196 is a catalytic residue. D-ribose 5-phosphate contacts are provided by residues arginine 198, aspartate 224, and 228–232 (DTAGT).

It belongs to the ribose-phosphate pyrophosphokinase family. Class I subfamily. In terms of assembly, homohexamer. The cofactor is Mg(2+).

The protein localises to the cytoplasm. The enzyme catalyses D-ribose 5-phosphate + ATP = 5-phospho-alpha-D-ribose 1-diphosphate + AMP + H(+). The protein operates within metabolic intermediate biosynthesis; 5-phospho-alpha-D-ribose 1-diphosphate biosynthesis; 5-phospho-alpha-D-ribose 1-diphosphate from D-ribose 5-phosphate (route I): step 1/1. Its function is as follows. Involved in the biosynthesis of the central metabolite phospho-alpha-D-ribosyl-1-pyrophosphate (PRPP) via the transfer of pyrophosphoryl group from ATP to 1-hydroxyl of ribose-5-phosphate (Rib-5-P). This chain is Ribose-phosphate pyrophosphokinase 1, found in Streptococcus mutans serotype c (strain ATCC 700610 / UA159).